The chain runs to 310 residues: Protein CUP-SHAPED COTYLEDON 1 (310 aa).

An NAC domain is found at 20 to 172 (MPPGFRFHPT…EWVLCKVCLK (153 aa)). A DNA-binding region spans residues 119–178 (LGMKKTLVFYKGRAPKGEKSCWVMHEYRLDGKFSYHYISSSAKDEWVLCKVCLKSGVVSR). 2 involved in transactivation activity regions span residues 179–210 (ETNL…NTFA) and 306–310 (WPFTL).

In terms of tissue distribution, expressed in inflorescence stems, rosette leaves, aerial parts of seedlings, flowers, floral buds and roots.

It localises to the nucleus. Functionally, transcription activator of STM and KNAT6. Involved in molecular mechanisms regulating shoot apical meristem (SAM) formation during embryogenesis and organ separation. Required for the fusion of septa of gynoecia along the length of the ovaries. Activates the shoot formation in callus in a STM-dependent manner. Seems to act as an inhibitor of cell division. This is Protein CUP-SHAPED COTYLEDON 1 (NAC054) from Arabidopsis thaliana (Mouse-ear cress).